Here is a 260-residue protein sequence, read N- to C-terminus: GDSL esterase/lipase WDL1 (260 aa).

An N-terminal signal peptide occupies residues 1–35; that stretch reads MLGFAPAPGRPLFVLFGSSIVQFSFSNGGWGAALA. The Nucleophile role is filled by Ser18. 2 N-linked (GlcNAc...) asparagine glycosylation sites follow: Asn83 and Asn150. Residues Asp191 and His194 contribute to the active site.

This sequence belongs to the 'GDSL' lipolytic enzyme family. As to expression, highly expressed in panicles. Expressed in shoots, mature flowers and seeds.

Its subcellular location is the endoplasmic reticulum. Functionally, involved in the organization of leaf cuticle and wax crystals. In Oryza sativa subsp. japonica (Rice), this protein is GDSL esterase/lipase WDL1.